We begin with the raw amino-acid sequence, 397 residues long: Aspartate/prephenate aminotransferase (397 aa).

Residues Gly38, Trp124, and Asn174 each contribute to the L-aspartate site. Lys238 carries the N6-(pyridoxal phosphate)lysine modification. Position 375 (Arg375) interacts with L-aspartate.

Belongs to the class-I pyridoxal-phosphate-dependent aminotransferase family. In terms of assembly, homodimer. Pyridoxal 5'-phosphate serves as cofactor.

The protein resides in the cytoplasm. It carries out the reaction L-aspartate + 2-oxoglutarate = oxaloacetate + L-glutamate. The enzyme catalyses L-arogenate + 2-oxoglutarate = prephenate + L-glutamate. In terms of biological role, catalyzes the reversible conversion of aspartate and 2-oxoglutarate to glutamate and oxaloacetate. Can also transaminate prephenate in the presence of glutamate, with lower efficiency. This chain is Aspartate/prephenate aminotransferase, found in Nitrosomonas europaea (strain ATCC 19718 / CIP 103999 / KCTC 2705 / NBRC 14298).